Reading from the N-terminus, the 122-residue chain is Large ribosomal subunit protein uL14 (122 aa).

This sequence belongs to the universal ribosomal protein uL14 family. As to quaternary structure, part of the 50S ribosomal subunit. Forms a cluster with proteins L3 and L19. In the 70S ribosome, L14 and L19 interact and together make contacts with the 16S rRNA in bridges B5 and B8.

In terms of biological role, binds to 23S rRNA. Forms part of two intersubunit bridges in the 70S ribosome. The chain is Large ribosomal subunit protein uL14 from Campylobacter lari (strain RM2100 / D67 / ATCC BAA-1060).